Reading from the N-terminus, the 330-residue chain is Ketol-acid reductoisomerase (NADP(+)) (330 aa).

The region spanning 2 to 182 is the KARI N-terminal Rossmann domain; sequence ARMYYDADAN…GGTRAGILET (181 aa). Residues 25–28, Ser51, Ser53, and 83–86 each bind NADP(+); these read YGSQ and DEFQ. His108 is a catalytic residue. Gly134 is an NADP(+) binding site. The 146-residue stretch at 183 to 328 folds into the KARI C-terminal knotted domain; that stretch reads SFREETETDL…KDLRAMFSWL (146 aa). Mg(2+) is bound by residues Asp191, Glu195, Glu227, and Glu231. Ser252 is a substrate binding site.

Belongs to the ketol-acid reductoisomerase family. Mg(2+) is required as a cofactor.

It catalyses the reaction (2R)-2,3-dihydroxy-3-methylbutanoate + NADP(+) = (2S)-2-acetolactate + NADPH + H(+). The catalysed reaction is (2R,3R)-2,3-dihydroxy-3-methylpentanoate + NADP(+) = (S)-2-ethyl-2-hydroxy-3-oxobutanoate + NADPH + H(+). The protein operates within amino-acid biosynthesis; L-isoleucine biosynthesis; L-isoleucine from 2-oxobutanoate: step 2/4. Its pathway is amino-acid biosynthesis; L-valine biosynthesis; L-valine from pyruvate: step 2/4. Its function is as follows. Involved in the biosynthesis of branched-chain amino acids (BCAA). Catalyzes an alkyl-migration followed by a ketol-acid reduction of (S)-2-acetolactate (S2AL) to yield (R)-2,3-dihydroxy-isovalerate. In the isomerase reaction, S2AL is rearranged via a Mg-dependent methyl migration to produce 3-hydroxy-3-methyl-2-ketobutyrate (HMKB). In the reductase reaction, this 2-ketoacid undergoes a metal-dependent reduction by NADPH to yield (R)-2,3-dihydroxy-isovalerate. The polypeptide is Ketol-acid reductoisomerase (NADP(+)) (Synechococcus sp. (strain ATCC 27144 / PCC 6301 / SAUG 1402/1) (Anacystis nidulans)).